A 458-amino-acid chain; its full sequence is F-box/LRR-repeat protein At5g02910 (458 aa).

The F-box domain maps to 10–56 (MDFISSLPDEILHHILSSVPTKSAIRTSLLSKRWRYVWSETPSLSID). LRR repeat units lie at residues 57–84 (CRRADPNSIDKTLSFFSAPKITSFHLHT), 86–112 (LLNRIDSVNGCIEFAISHNAEKLSLES), 133–161 (KQLFVDSGSVHLIPRCTVSWTSLKNLSLS), 162–187 (NCTLSDESFLKILSGSPLLESLELLY), 226–251 (CLRLRHSRLPCSLVDVSSLTEADLNI), 260–285 (TAGFLQHNVVKMLQMLQNVEKLTIGG), 325–353 (KLLRYTPGLRKLTIHTVKCSSISELHLND), and 389–414 (ESNLVALFMERLLKSTKSLETMVVLL).

This Arabidopsis thaliana (Mouse-ear cress) protein is F-box/LRR-repeat protein At5g02910.